Here is a 147-residue protein sequence, read N- to C-terminus: Ribonuclease 4 (147 aa).

Residues 1 to 28 (MALQRTQAFLLLLLLTLLGLGLVQPSYG) form the signal peptide. At glutamine 29 the chain carries Pyrrolidone carboxylic acid. Positions 35, 40, 68, 71, and 72 each coordinate dUMP. Histidine 40 acts as the Proton acceptor in catalysis. 4 disulfide bridges follow: cysteine 53–cysteine 109, cysteine 67–cysteine 120, cysteine 85–cysteine 135, and cysteine 92–cysteine 99. The active-site Proton donor is histidine 144. Phenylalanine 145 contributes to the dUMP binding site.

This sequence belongs to the pancreatic ribonuclease family.

Its subcellular location is the secreted. In terms of biological role, cleaves preferentially after uridine bases. Has antimicrobial activity against uropathogenic E.coli (UPEC). Probably contributes to urinary tract sterility. The sequence is that of Ribonuclease 4 (RNASE4) from Bos taurus (Bovine).